Here is a 235-residue protein sequence, read N- to C-terminus: 2-C-methyl-D-erythritol 4-phosphate cytidylyltransferase (235 aa).

The protein belongs to the IspD/TarI cytidylyltransferase family. IspD subfamily.

It catalyses the reaction 2-C-methyl-D-erythritol 4-phosphate + CTP + H(+) = 4-CDP-2-C-methyl-D-erythritol + diphosphate. It functions in the pathway isoprenoid biosynthesis; isopentenyl diphosphate biosynthesis via DXP pathway; isopentenyl diphosphate from 1-deoxy-D-xylulose 5-phosphate: step 2/6. In terms of biological role, catalyzes the formation of 4-diphosphocytidyl-2-C-methyl-D-erythritol from CTP and 2-C-methyl-D-erythritol 4-phosphate (MEP). The sequence is that of 2-C-methyl-D-erythritol 4-phosphate cytidylyltransferase from Pseudomonas putida (strain ATCC 47054 / DSM 6125 / CFBP 8728 / NCIMB 11950 / KT2440).